We begin with the raw amino-acid sequence, 236 residues long: Phosphoribosylaminoimidazole-succinocarboxamide synthase (236 aa).

Belongs to the SAICAR synthetase family.

The catalysed reaction is 5-amino-1-(5-phospho-D-ribosyl)imidazole-4-carboxylate + L-aspartate + ATP = (2S)-2-[5-amino-1-(5-phospho-beta-D-ribosyl)imidazole-4-carboxamido]succinate + ADP + phosphate + 2 H(+). It participates in purine metabolism; IMP biosynthesis via de novo pathway; 5-amino-1-(5-phospho-D-ribosyl)imidazole-4-carboxamide from 5-amino-1-(5-phospho-D-ribosyl)imidazole-4-carboxylate: step 1/2. The sequence is that of Phosphoribosylaminoimidazole-succinocarboxamide synthase from Streptococcus equi subsp. zooepidemicus (strain H70).